The chain runs to 629 residues: tRNA uridine 5-carboxymethylaminomethyl modification enzyme MnmG (629 aa).

Residues 13–18 (GGGHAG), V125, and S180 each bind FAD. Position 273-287 (273-287 (GPRYCPSIEDKVMRF)) interacts with NAD(+). Position 370 (Q370) interacts with FAD.

This sequence belongs to the MnmG family. As to quaternary structure, homodimer. Heterotetramer of two MnmE and two MnmG subunits. Requires FAD as cofactor.

Its subcellular location is the cytoplasm. Functionally, NAD-binding protein involved in the addition of a carboxymethylaminomethyl (cmnm) group at the wobble position (U34) of certain tRNAs, forming tRNA-cmnm(5)s(2)U34. The chain is tRNA uridine 5-carboxymethylaminomethyl modification enzyme MnmG from Salmonella agona (strain SL483).